The sequence spans 927 residues: Echinoderm microtubule-associated protein-like 4 (927 aa).

Residues methionine 1–aspartate 189 form a microtubule-binding region. Residues alanine 14–arginine 63 are a coiled coil. The tract at residues asparagine 85–arginine 132 is disordered. A compositionally biased stretch (basic and acidic residues) spans serine 116 to arginine 132. 13 WD repeats span residues leucine 199 to tyrosine 237, threonine 241 to serine 288, valine 296 to tryptophan 336, alanine 343 to tryptophan 378, arginine 385 to lysine 424, glutamine 442 to histidine 480, glutamate 485 to threonine 521, aspartate 524 to serine 563, serine 567 to alanine 604, valine 610 to valine 646, tyrosine 653 to isoleucine 692, arginine 702 to tyrosine 760, and alanine 767 to leucine 806. The span at asparagine 815 to valine 829 shows a compositional bias: polar residues. The segment at asparagine 815–serine 927 is disordered. Residues alanine 914–serine 927 are compositionally biased toward acidic residues.

The protein belongs to the WD repeat EMAP family. In terms of assembly, homotrimer; self-association is mediated by the N-terminal coiled coil.

It localises to the cytoplasm. The protein resides in the cytoskeleton. The protein localises to the spindle. It is found in the microtubule organizing center. Its subcellular location is the midbody. In terms of biological role, essential for the formation and stability of microtubules (MTs). Required for the organization of the mitotic spindle and for the proper attachment of kinetochores to MTs. Promotes the recruitment of NUDC to the mitotic spindle for mitotic progression. The protein is Echinoderm microtubule-associated protein-like 4 (eml4) of Xenopus laevis (African clawed frog).